Here is a 183-residue protein sequence, read N- to C-terminus: Adenine phosphoribosyltransferase (183 aa).

This sequence belongs to the purine/pyrimidine phosphoribosyltransferase family. As to quaternary structure, homodimer.

It is found in the cytoplasm. The enzyme catalyses AMP + diphosphate = 5-phospho-alpha-D-ribose 1-diphosphate + adenine. It participates in purine metabolism; AMP biosynthesis via salvage pathway; AMP from adenine: step 1/1. In terms of biological role, catalyzes a salvage reaction resulting in the formation of AMP, that is energically less costly than de novo synthesis. The protein is Adenine phosphoribosyltransferase of Citrobacter koseri (strain ATCC BAA-895 / CDC 4225-83 / SGSC4696).